A 177-amino-acid chain; its full sequence is Large ribosomal subunit protein uL6 (177 aa).

Positions 152 to 171 (RPPEPYKGKGVRYDDEEVRR) are enriched in basic and acidic residues. The disordered stretch occupies residues 152–177 (RPPEPYKGKGVRYDDEEVRRKEAKKK).

It belongs to the universal ribosomal protein uL6 family. Part of the 50S ribosomal subunit.

Functionally, this protein binds to the 23S rRNA, and is important in its secondary structure. It is located near the subunit interface in the base of the L7/L12 stalk, and near the tRNA binding site of the peptidyltransferase center. The chain is Large ribosomal subunit protein uL6 from Shewanella oneidensis (strain ATCC 700550 / JCM 31522 / CIP 106686 / LMG 19005 / NCIMB 14063 / MR-1).